We begin with the raw amino-acid sequence, 359 residues long: Fructose-like permease IIC component 2 (359 aa).

The PTS EIIC type-2 domain occupies Thr-11 to Ser-344. 9 consecutive transmembrane segments (helical) span residues Val-19–Leu-39, Ile-60–Ile-80, Phe-99–Tyr-119, Ile-135–Gly-155, Ser-176–Val-196, Val-216–Ile-236, Ala-251–Asp-271, Ala-290–Val-310, and Leu-314–Leu-334.

The protein localises to the cell inner membrane. In terms of biological role, the phosphoenolpyruvate-dependent sugar phosphotransferase system (PTS), a major carbohydrate active -transport system, catalyzes the phosphorylation of incoming sugar substrates concomitant with their translocation across the cell membrane. The polypeptide is Fructose-like permease IIC component 2 (frwC) (Escherichia coli (strain K12)).